Consider the following 181-residue polypeptide: Ribulose bisphosphate carboxylase small subunit 2B, chloroplastic (181 aa).

The N-terminal 54 residues, 1-54 (MASSMFSSTAVVTSPAQATMVAPFTGLKSSASFPVTRKANNDITSITSNGGRVS), are a transit peptide targeting the chloroplast.

The protein belongs to the RuBisCO small chain family. Heterohexadecamer of 8 large and 8 small subunits.

It localises to the plastid. Its subcellular location is the chloroplast. In terms of biological role, ruBisCO catalyzes two reactions: the carboxylation of D-ribulose 1,5-bisphosphate, the primary event in carbon dioxide fixation, as well as the oxidative fragmentation of the pentose substrate. Both reactions occur simultaneously and in competition at the same active site. Although the small subunit is not catalytic it is essential for maximal activity. The polypeptide is Ribulose bisphosphate carboxylase small subunit 2B, chloroplastic (RBCS-2B) (Arabidopsis thaliana (Mouse-ear cress)).